Reading from the N-terminus, the 492-residue chain is Bifunctional purine biosynthesis protein PurH (492 aa).

One can recognise an MGS-like domain in the interval methionine 1–valine 144.

This sequence belongs to the PurH family.

It catalyses the reaction (6R)-10-formyltetrahydrofolate + 5-amino-1-(5-phospho-beta-D-ribosyl)imidazole-4-carboxamide = 5-formamido-1-(5-phospho-D-ribosyl)imidazole-4-carboxamide + (6S)-5,6,7,8-tetrahydrofolate. The catalysed reaction is IMP + H2O = 5-formamido-1-(5-phospho-D-ribosyl)imidazole-4-carboxamide. It participates in purine metabolism; IMP biosynthesis via de novo pathway; 5-formamido-1-(5-phospho-D-ribosyl)imidazole-4-carboxamide from 5-amino-1-(5-phospho-D-ribosyl)imidazole-4-carboxamide (10-formyl THF route): step 1/1. The protein operates within purine metabolism; IMP biosynthesis via de novo pathway; IMP from 5-formamido-1-(5-phospho-D-ribosyl)imidazole-4-carboxamide: step 1/1. This is Bifunctional purine biosynthesis protein PurH from Staphylococcus aureus (strain bovine RF122 / ET3-1).